A 382-amino-acid polypeptide reads, in one-letter code: V-type proton ATPase subunit C 1 (382 aa).

At Thr-2 the chain carries N-acetylthreonine.

This sequence belongs to the V-ATPase C subunit family. V-ATPase is a heteromultimeric enzyme made up of two complexes: the ATP-hydrolytic V1 complex and the proton translocation V0 complex. The V1 complex consists of three catalytic AB heterodimers that form a heterohexamer, three peripheral stalks each consisting of EG heterodimers, one central rotor including subunits D and F, and the regulatory subunits C and H. The proton translocation complex V0 consists of the proton transport subunit a, a ring of proteolipid subunits c9c'', rotary subunit d, subunits e and f, and the accessory subunits ATP6AP1/Ac45 and ATP6AP2/PRR. As to expression, expressed in brain (at protein level).

It localises to the cytoplasmic vesicle. Its subcellular location is the secretory vesicle. It is found in the synaptic vesicle membrane. The protein localises to the clathrin-coated vesicle membrane. Functionally, subunit of the V1 complex of vacuolar(H+)-ATPase (V-ATPase), a multisubunit enzyme composed of a peripheral complex (V1) that hydrolyzes ATP and a membrane integral complex (V0) that translocates protons. V-ATPase is responsible for acidifying and maintaining the pH of intracellular compartments and in some cell types, is targeted to the plasma membrane, where it is responsible for acidifying the extracellular environment. Subunit C is necessary for the assembly of the catalytic sector of the enzyme and is likely to have a specific function in its catalytic activity. The protein is V-type proton ATPase subunit C 1 (Atp6v1c1) of Rattus norvegicus (Rat).